A 333-amino-acid chain; its full sequence is Holliday junction branch migration complex subunit RuvB (333 aa).

Positions 1-181 (MARILDNDLL…FGINGHMEYY (181 aa)) are large ATPase domain (RuvB-L). Residues Leu-20, Arg-21, Gly-62, Lys-65, Thr-66, Thr-67, 128–130 (EDY), Arg-171, Tyr-181, and Arg-218 contribute to the ATP site. Mg(2+) is bound at residue Thr-66. A presensor-1 beta-hairpin region spans residues 130–148 (YYIDIMIGAGETSRSVHLD). A small ATPAse domain (RuvB-S) region spans residues 182-252 (ELPDLTEIVE…IADQALTMLD (71 aa)). A head domain (RuvB-H) region spans residues 255–333 (HEGLDYVDQK…HMGYDYTRDN (79 aa)). The DNA site is built by Arg-291, Arg-310, Arg-312, and Arg-315.

It belongs to the RuvB family. As to quaternary structure, homohexamer. Forms an RuvA(8)-RuvB(12)-Holliday junction (HJ) complex. HJ DNA is sandwiched between 2 RuvA tetramers; dsDNA enters through RuvA and exits via RuvB. Only 4 subunits contact one DNA strand at any time. Two adjacent subunits are contacted by domain III of RuvA. An RuvB hexamer assembles on each DNA strand where it exits the tetramer. Each RuvB hexamer is contacted by two RuvA subunits (via domain III) on 2 adjacent RuvB subunits; this complex drives branch migration. In the full resolvosome a probable DNA-RuvA(4)-RuvB(12)-RuvC(2) complex forms which resolves the HJ.

Its subcellular location is the cytoplasm. The catalysed reaction is ATP + H2O = ADP + phosphate + H(+). Its activity is regulated as follows. Binding of domain III of RuvA to a single subunit of the RuvB hexamer activates the ATPase 2 subunits away and nucleotide exchange in the adjacent subunit. The RuvA-RuvB-RuvC complex processes Holliday junction (HJ) DNA during genetic recombination and DNA repair, while the RuvA-RuvB complex plays an important role in the rescue of blocked DNA replication forks via replication fork reversal (RFR). Catalyzes branch migration on Holliday junction (HJ) DNA in complex with RuvA from S.typhimurim and ATP. RuvA specifically binds to HJ cruciform DNA, conferring on it an open structure. The RuvB hexamer acts as an ATP-dependent pump, pulling dsDNA into and through the RuvAB complex. Forms 2 homohexamers on either side of HJ DNA bound by 1 or 2 RuvA tetramers; 4 subunits per hexamer contact DNA at a time. Coordinated motions by a converter formed by DNA-disengaged RuvB subunits stimulates ATP hydrolysis and nucleotide exchange. Immobilization of the converter enables RuvB to convert the ATP-contained energy into a lever motion, pulling 2 nucleotides of DNA out of the RuvA tetramer per ATP hydrolyzed, thus driving DNA branch migration. The RuvB motors rotate together with the DNA substrate, which together with the progressing nucleotide cycle forms the mechanistic basis for DNA recombination by continuous branch migration. Branch migration allows RuvC to scan DNA until it finds its consensus sequence, where it cleaves and resolves cruciform DNA. In Streptococcus thermophilus (strain ATCC BAA-250 / LMG 18311), this protein is Holliday junction branch migration complex subunit RuvB.